Here is a 513-residue protein sequence, read N- to C-terminus: ATP synthase subunit alpha (513 aa).

169-176 (GDRQTGKT) is a binding site for ATP.

It belongs to the ATPase alpha/beta chains family. As to quaternary structure, F-type ATPases have 2 components, CF(1) - the catalytic core - and CF(0) - the membrane proton channel. CF(1) has five subunits: alpha(3), beta(3), gamma(1), delta(1), epsilon(1). CF(0) has three main subunits: a(1), b(2) and c(9-12). The alpha and beta chains form an alternating ring which encloses part of the gamma chain. CF(1) is attached to CF(0) by a central stalk formed by the gamma and epsilon chains, while a peripheral stalk is formed by the delta and b chains.

The protein localises to the cell inner membrane. The enzyme catalyses ATP + H2O + 4 H(+)(in) = ADP + phosphate + 5 H(+)(out). Its function is as follows. Produces ATP from ADP in the presence of a proton gradient across the membrane. The alpha chain is a regulatory subunit. The chain is ATP synthase subunit alpha from Nitrosomonas europaea (strain ATCC 19718 / CIP 103999 / KCTC 2705 / NBRC 14298).